A 230-amino-acid polypeptide reads, in one-letter code: Endonuclease NucS (230 aa).

Belongs to the NucS endonuclease family.

It is found in the cytoplasm. Its function is as follows. Cleaves both 3' and 5' ssDNA extremities of branched DNA structures. In Corynebacterium aurimucosum (strain ATCC 700975 / DSM 44827 / CIP 107346 / CN-1) (Corynebacterium nigricans), this protein is Endonuclease NucS.